The sequence spans 166 residues: MVDAHTRKTLAAIPLLRVNAGPRSGDLWRARHKEELMSLITYVKNNKENDNDWFRLESNPEGTRWFGKCWIVVDMLKYEFDLEFDIPVAYPSTAPEIAIPELDGKTAKMYRGGKICLTDHFKPLWARNVPHFGIAHAMALGLGPWLAVEIPDLVSKGIVKHKETSS.

The Glycyl thioester intermediate role is filled by cysteine 116.

It belongs to the ubiquitin-conjugating enzyme family. UFC1 subfamily.

E2-like enzyme which forms an intermediate with UFM1 via a thioester linkage. The protein is Ubiquitin-fold modifier-conjugating enzyme 1 of Monosiga brevicollis (Choanoflagellate).